The primary structure comprises 198 residues: Putative 3-methyladenine DNA glycosylase (198 aa).

The protein belongs to the DNA glycosylase MPG family.

This is Putative 3-methyladenine DNA glycosylase from Oceanobacillus iheyensis (strain DSM 14371 / CIP 107618 / JCM 11309 / KCTC 3954 / HTE831).